The primary structure comprises 596 residues: Elongation factor 4 (596 aa).

One can recognise a tr-type G domain in the interval 2-184; sequence KHIRNFSIIA…VIVEQIPPPE (183 aa). Residues 14–19 and 131–134 each bind GTP; these read DHGKST and NKID.

This sequence belongs to the TRAFAC class translation factor GTPase superfamily. Classic translation factor GTPase family. LepA subfamily.

It is found in the cell inner membrane. It catalyses the reaction GTP + H2O = GDP + phosphate + H(+). Its function is as follows. Required for accurate and efficient protein synthesis under certain stress conditions. May act as a fidelity factor of the translation reaction, by catalyzing a one-codon backward translocation of tRNAs on improperly translocated ribosomes. Back-translocation proceeds from a post-translocation (POST) complex to a pre-translocation (PRE) complex, thus giving elongation factor G a second chance to translocate the tRNAs correctly. Binds to ribosomes in a GTP-dependent manner. The sequence is that of Elongation factor 4 from Shewanella sp. (strain MR-7).